The sequence spans 405 residues: Probable dual-specificity RNA methyltransferase RlmN (405 aa).

Residues 1–15 (MSSTGSSVSTSGLVL) show a composition bias toward low complexity. Residues 1 to 34 (MSSTGSSVSTSGLVLPSTPLAEPGKEVPLVVNTP) form a disordered region. Residue Glu-130 is the Proton acceptor of the active site. The region spanning 142-386 (SAARATLCLS…VTVRDTRGSE (245 aa)) is the Radical SAM core domain. The cysteines at positions 149 and 391 are disulfide-linked. [4Fe-4S] cluster contacts are provided by Cys-156, Cys-160, and Cys-163. S-adenosyl-L-methionine is bound by residues 211–212 (GE), Ser-245, 268–270 (SLH), and Asn-348. The active-site S-methylcysteine intermediate is Cys-391.

It belongs to the radical SAM superfamily. RlmN family. It depends on [4Fe-4S] cluster as a cofactor.

It is found in the cytoplasm. It carries out the reaction adenosine(2503) in 23S rRNA + 2 reduced [2Fe-2S]-[ferredoxin] + 2 S-adenosyl-L-methionine = 2-methyladenosine(2503) in 23S rRNA + 5'-deoxyadenosine + L-methionine + 2 oxidized [2Fe-2S]-[ferredoxin] + S-adenosyl-L-homocysteine. The catalysed reaction is adenosine(37) in tRNA + 2 reduced [2Fe-2S]-[ferredoxin] + 2 S-adenosyl-L-methionine = 2-methyladenosine(37) in tRNA + 5'-deoxyadenosine + L-methionine + 2 oxidized [2Fe-2S]-[ferredoxin] + S-adenosyl-L-homocysteine. Specifically methylates position 2 of adenine 2503 in 23S rRNA and position 2 of adenine 37 in tRNAs. In Cutibacterium acnes (strain DSM 16379 / KPA171202) (Propionibacterium acnes), this protein is Probable dual-specificity RNA methyltransferase RlmN.